Reading from the N-terminus, the 379-residue chain is Acyl-CoA dehydrogenase (379 aa).

This sequence belongs to the acyl-CoA dehydrogenase family. The cofactor is FAD.

It catalyses the reaction a 2,3-saturated acyl-CoA + A = a 2,3-dehydroacyl-CoA + AH2. The polypeptide is Acyl-CoA dehydrogenase (mmgC) (Bacillus subtilis (strain 168)).